Consider the following 426-residue polypeptide: MKKFILFLIILLFSIYFLNVSSAEVCPFKDGFIIIYHDIGYDKLFGYTYNDSEILYFNNKNLMDITPISDYYFPELYHNITYFECGSTNNLTILSFGYFYFPKNGDGIVFLGVLVYTTKNNKINYTEKILWADVFYSVDDFDISPPACSPNEALLVYCYKMKADYPENILVLINNTNITELKKFEDDDYYTTFQHYIYQPIFIFTTYDSKAKKFYILDGRLSNTSFPLYSYYGGKIHFEDNITLPKYENISWECMDFYSINGTLYIVMKKLNCSNINYAGWYEDYLNQKPYLLIWKNKTIKIISNCSNPYYFVKIKGGEIPIEKSYLKKIFGNKYESIRITDLAYNNGILLIETNENHKLHYYIVKNNSIEEIKLKNIIKLYKKKHSLWDDIKKELEPKIYWVIHNWYIIVLIIAGLLWMAILWKK.

Positions 1–23 are cleaved as a signal peptide; sequence MKKFILFLIILLFSIYFLNVSSA.

This is an uncharacterized protein from Methanocaldococcus jannaschii (strain ATCC 43067 / DSM 2661 / JAL-1 / JCM 10045 / NBRC 100440) (Methanococcus jannaschii).